Reading from the N-terminus, the 184-residue chain is ADP-ribosylation factor-like protein 2 (184 aa).

Residue Gly2 is the site of N-myristoyl glycine attachment. GTP-binding positions include 23-30 (GLDNAGKT), 66-70 (DVGGQ), and 125-128 (NKQD).

Belongs to the small GTPase superfamily. Arf family. As to expression, ubiquitously expressed.

In terms of biological role, GTP-binding protein involved in protein trafficking; may modulate vesicle budding and uncoating within the Golgi apparatus. This is ADP-ribosylation factor-like protein 2 (Arl2) from Drosophila melanogaster (Fruit fly).